A 795-amino-acid polypeptide reads, in one-letter code: Endoplasmin (795 aa).

Positions 1-21 are cleaved as a signal peptide; it reads MKSAWALALACTLLLAASVTA. The SRT pseudosubstrate motif motif lies at 41-43; that stretch reads SRT. N61 and N106 each carry an N-linked (GlcNAc...) asparagine glycan. ATP-binding residues include N106, D148, N161, and F198. N216 carries N-linked (GlcNAc...) asparagine glycosylation. A compositionally biased stretch (acidic residues) spans 289–316; sequence EEPVEEEEAKEEKEETDDNEAAVEEEEE. The disordered stretch occupies residues 289–322; the sequence is EEPVEEEEAKEEKEETDDNEAAVEEEEEEKKPKT. 3 N-linked (GlcNAc...) asparagine glycosylation sites follow: N444, N480, and N501. Residues 751–795 are disordered; it reads DAKVEEEPEEPEDAAEEAEQDEEEVDADAEDSETQKESTDVKDEL. The span at 756–782 shows a compositional bias: acidic residues; the sequence is EEPEEPEDAAEEAEQDEEEVDADAEDS. The span at 783–795 shows a compositional bias: basic and acidic residues; that stretch reads ETQKESTDVKDEL. The Prevents secretion from ER motif lies at 792–795; that stretch reads KDEL.

This sequence belongs to the heat shock protein 90 family. As to quaternary structure, homodimer; disulfide-linked.

Its subcellular location is the endoplasmic reticulum lumen. It localises to the sarcoplasmic reticulum lumen. The catalysed reaction is ATP + H2O = ADP + phosphate + H(+). In terms of biological role, ATP-dependent chaperone involved in the processing of proteins in the endoplasmic reticulum, regulating their transport. This chain is Endoplasmin (HSP90B1), found in Gallus gallus (Chicken).